Consider the following 145-residue polypeptide: Protein SprT-like (145 aa).

Residues 4 to 140 (TNYVQEVSLA…VCGNCHGKLI (137 aa)) enclose the SprT-like domain. A Zn(2+)-binding site is contributed by His-64. Residue Glu-65 is part of the active site. A Zn(2+)-binding site is contributed by His-68.

Belongs to the SprT family. The cofactor is Zn(2+).

The protein resides in the cytoplasm. The protein is Protein SprT-like of Streptococcus pyogenes serotype M6 (strain ATCC BAA-946 / MGAS10394).